Reading from the N-terminus, the 180-residue chain is Large ribosomal subunit protein bL17 (180 aa).

The tract at residues 134-180 (AQAKAKKAAAMPTEESEAKPAEEGDVVGASEPDAKAPEEPPAEAPEN) is disordered.

The protein belongs to the bacterial ribosomal protein bL17 family. In terms of assembly, part of the 50S ribosomal subunit. Contacts protein L32.

This chain is Large ribosomal subunit protein bL17, found in Mycobacterium tuberculosis (strain ATCC 25177 / H37Ra).